Consider the following 312-residue polypeptide: MVVTMRAALRLMLISTVSLELIIGILANVFIALVNIIDWIKRGKISAVDKIYMGLAISRTAFVLSVITGFLIAFLDPASLGIGIMIRLLTMSWTVTNHFSVWFATCLSIFYFLKITNFSNTVFLALKWKVKKVVSVTLVVSLIILFINVIVIHIYTDRFQVNMVQKCGANNTLRAYGLFLSISTVFTFIPFTASLTMFLLLIFSLWRHLKTMHHNATGSRDVSTVAHIKGLQTVVAFLLLYTVFAMSLFSQSLSIDAQHTNLLSHFLRCIGVAFPSGHSCALILGNNKLRQASLSVIFWLRCKYKHTENQGP.

The Extracellular portion of the chain corresponds to 1-16 (MVVTMRAALRLMLIST). Residues 17–37 (VSLELIIGILANVFIALVNII) form a helical membrane-spanning segment. Residues 38-65 (DWIKRGKISAVDKIYMGLAISRTAFVLS) are Cytoplasmic-facing. A helical membrane pass occupies residues 66–86 (VITGFLIAFLDPASLGIGIMI). Topologically, residues 87 to 92 (RLLTMS) are extracellular. Residues 93-113 (WTVTNHFSVWFATCLSIFYFL) form a helical membrane-spanning segment. Residues 114-133 (KITNFSNTVFLALKWKVKKV) lie on the Cytoplasmic side of the membrane. The chain crosses the membrane as a helical span at residues 134–154 (VSVTLVVSLIILFINVIVIHI). Residues 155–184 (YTDRFQVNMVQKCGANNTLRAYGLFLSIST) are Extracellular-facing. Residue N170 is glycosylated (N-linked (GlcNAc...) asparagine). Residues 185–205 (VFTFIPFTASLTMFLLLIFSL) form a helical membrane-spanning segment. Over 206–229 (WRHLKTMHHNATGSRDVSTVAHIK) the chain is Cytoplasmic. A helical transmembrane segment spans residues 230 to 250 (GLQTVVAFLLLYTVFAMSLFS). Residues 251 to 264 (QSLSIDAQHTNLLS) are Extracellular-facing. The helical transmembrane segment at 265-285 (HFLRCIGVAFPSGHSCALILG) threads the bilayer. The Cytoplasmic portion of the chain corresponds to 286-312 (NNKLRQASLSVIFWLRCKYKHTENQGP).

This sequence belongs to the G-protein coupled receptor T2R family.

It is found in the membrane. Its function is as follows. Gustducin-coupled receptor implicated in the perception of bitter compounds in the oral cavity and the gastrointestinal tract. Signals through PLCB2 and the calcium-regulated cation channel TRPM5. This chain is Taste receptor type 2 member 103, found in Rattus norvegicus (Rat).